The following is a 182-amino-acid chain: MNSTHHYEQLIEIFNSCFADDFNTRLIKGDDEPIYLPADAEVPYNRIVFAHGFYASAIHEISHWCIAGKARRELVDFGYWYCPDGRDAQTQSQFEDVEVKPQALDWLFCVAAGYPFNVSCDNLEGDFEPDRVVFQRRVHAQVMDYLTNGIPERPARFIKALQNYYHTPELTAEQFPWPEALN.

Belongs to the EpmC family.

The enzyme catalyses N(6)-((3R)-3,6-diaminohexanoyl)-L-lysyl-[protein] + NADPH + O2 + H(+) = N(6)-((3R)-3,6-diaminohexanoyl)-5-hydroxy-L-lysyl-[protein] + NADP(+) + H2O. Its activity is regulated as follows. Hydroxylation activity is abolished by NADP and increased by NADPH. Functionally, is involved in the final hydroxylation step of the post-translational modification of translation elongation factor P (EF-P) on 'Lys-34'. Acts after beta-lysylation of 'Lys-34' by EpmA and EpmB. EpmC adds an oxygen atom to the C5 position of 'Lys-34' and does not modify the added beta-lysine. This is Elongation factor P lysine hydroxylase (epmC) from Escherichia coli (strain K12).